The chain runs to 90 residues: Small ribosomal subunit protein uS15c (90 aa).

The protein belongs to the universal ribosomal protein uS15 family. As to quaternary structure, part of the 30S ribosomal subunit.

The protein resides in the plastid. Its subcellular location is the chloroplast. The chain is Small ribosomal subunit protein uS15c (rps15-A) from Brachypodium distachyon (Purple false brome).